Here is a 149-residue protein sequence, read N- to C-terminus: Calmodulin (149 aa).

N-acetylalanine is present on Ala2. 4 consecutive EF-hand domains span residues 8–43 (EQVSEYKEAFSLFDKDGDGQITTKELGTVMRSLGQN), 44–79 (PSESELQDMINEVDADNNGTIDFPEFLTMMARKMKD), 81–116 (DSEEEIREAFKVFDRDNNGFISAAELRHVMTSIGEK), and 117–149 (LTDDEVDEMIREADQDGDGRIDYNEFVQLMMQK). Residues Asp21, Asp23, Asp25, Gln27, Glu32, Asp57, Asp59, Asn61, Thr63, Glu68, Asp94, Asp96, Asn98, Glu105, Asp130, Asp132, Asp134, Arg136, and Glu141 each contribute to the Ca(2+) site.

This sequence belongs to the calmodulin family.

In terms of biological role, calmodulin mediates the control of a large number of enzymes, ion channels and other proteins by Ca(2+). Among the enzymes to be stimulated by the calmodulin-Ca(2+) complex are a number of protein kinases and phosphatases. The polypeptide is Calmodulin (camA) (Emericella nidulans (strain FGSC A4 / ATCC 38163 / CBS 112.46 / NRRL 194 / M139) (Aspergillus nidulans)).